The chain runs to 640 residues: Telomere repeat-binding protein 4 (640 aa).

Positions 343-422 constitute a Ubiquitin-like domain; it reads VKFSIKSLRI…LGNLGFTLEP (80 aa). The tract at residues 442–464 is disordered; that stretch reads TDSTKLSERSAASPALETGIPLP. In terms of domain architecture, HTH myb-type spans 530 to 589; that stretch reads SQRRTRRPFSVTEVEALVSAVEEVGTGRWRDVKLRSFENASHRTYVDLKDKWKTLVHTAS. The segment at residues 558-585 is a DNA-binding region (H-T-H motif); sequence WRDVKLRSFENASHRTYVDLKDKWKTLV.

Homomultimer. Interacts with SNL1 (via PAH2). Interacts with STO. Expressed ubiquitously. Highest expression in flowers and roots.

Its subcellular location is the nucleus. In terms of biological role, binds specifically to the plant telomeric double-stranded DNA sequences 5'-TTTAGGG-3'. At least 2 repeats of telomeric sequences are required for binding. Induces DNA bending. This is Telomere repeat-binding protein 4 (TRP4) from Arabidopsis thaliana (Mouse-ear cress).